Consider the following 394-residue polypeptide: tRNA-specific adenosine deaminase 1 (394 aa).

The region spanning 54-388 (SLGCGTKCIG…TKKPHELLDF (335 aa)) is the A to I editase domain. His78 provides a ligand contact to Zn(2+). The Proton donor role is filled by Glu80. Residues Arg84 and Arg85 each contribute to the 1D-myo-inositol hexakisphosphate site. Residues Cys127 and Cys191 each contribute to the Zn(2+) site. The 1D-myo-inositol hexakisphosphate site is built by Lys194, Arg197, Lys320, Lys357, and Lys381.

It belongs to the ADAT1 family. 1D-myo-inositol hexakisphosphate is required as a cofactor. In terms of tissue distribution, widely expressed in early embryos, and later concentrates in the central nervous system.

It catalyses the reaction adenosine(37) in tRNA(Ala) + H2O + H(+) = inosine(37) in tRNA(Ala) + NH4(+). Its function is as follows. Specifically deaminates adenosine-37 to inosine in tRNA-Ala. In Drosophila melanogaster (Fruit fly), this protein is tRNA-specific adenosine deaminase 1.